A 588-amino-acid chain; its full sequence is MLKSISLLKNNQILLKNIINNGRIINNVGEKLSSKSLLKINYSSSTTDRTFNILDGTIDKNSAEYKDNLINMNSTLKQLKENIEKIKLGGGEKLNQKNISRGKLLVRERIEALIDVGSPFLEFSQLAGWGMYGKEEVAAGGIITGIGKIHGVECVIVANDSTVKGGTYFPITVKKHLRAQEIAQENNLPCIYLVDSGGANLPRQADVFPDRDHFGRIFFNQANMSAKRIPQIAVVMGSCTAGGAYVPAMADESVIVKGTGTIFLGGPPLVKAATGEIVTSEELGGADLHCRTSGVTDHYARDDAEAIAITRRIVSNLNRKKQPSPVITETEEPLYPTSELAGIVPSDLKKNFDIRKVIARLVDGSRFDEFKELYGTTLICGFARVHGMPVGIIANNGILFSESAVKGAHFIELCNQRGIPLVFLQNITGFMVGKTYESKGIAKDGAKMVMAVATAKVPKITMIIGGSFGAGNYGMCGRSYSPRFLYMWPNAKISVMGGEQAASVLAQIQKDNMAKENKQWSPEEENTFKKPISDKFEEEGSIYYSSARCWDDGVIDPQDSRKVIALSLSACMNQPINPPSDGFGVFRM.

The CoA carboxyltransferase N-terminal domain maps to M72–E329. A carboxyltransferase region spans residues M72–A570. A CoA carboxyltransferase C-terminal domain is found at E329–A570. The interval R366 to N395 is acyl-CoA binding.

This sequence belongs to the AccD/PCCB family. In terms of assembly, probably a dodecamer composed of six biotin-containing alpha subunits and six beta subunits.

The protein resides in the mitochondrion matrix. The enzyme catalyses 3-methylbut-2-enoyl-CoA + hydrogencarbonate + ATP = 3-methyl-(2E)-glutaconyl-CoA + ADP + phosphate + H(+). It functions in the pathway amino-acid degradation; L-leucine degradation; (S)-3-hydroxy-3-methylglutaryl-CoA from 3-isovaleryl-CoA: step 2/3. In terms of biological role, carboxyltransferase subunit of the 3-methylcrotonyl-CoA carboxylase, an enzyme that catalyzes the conversion of 3-methylcrotonyl-CoA to 3-methylglutaconyl-CoA, a critical step for leucine and isovaleric acid catabolism. This is Methylcrotonoyl-CoA carboxylase beta chain, mitochondrial (mccb) from Dictyostelium discoideum (Social amoeba).